The primary structure comprises 568 residues: 2-succinyl-5-enolpyruvyl-6-hydroxy-3-cyclohexene-1-carboxylate synthase (568 aa).

It belongs to the TPP enzyme family. MenD subfamily. Homodimer. Requires Mg(2+) as cofactor. Mn(2+) serves as cofactor. The cofactor is thiamine diphosphate.

The catalysed reaction is isochorismate + 2-oxoglutarate + H(+) = 5-enolpyruvoyl-6-hydroxy-2-succinyl-cyclohex-3-ene-1-carboxylate + CO2. It functions in the pathway quinol/quinone metabolism; 1,4-dihydroxy-2-naphthoate biosynthesis; 1,4-dihydroxy-2-naphthoate from chorismate: step 2/7. Its pathway is quinol/quinone metabolism; menaquinone biosynthesis. Catalyzes the thiamine diphosphate-dependent decarboxylation of 2-oxoglutarate and the subsequent addition of the resulting succinic semialdehyde-thiamine pyrophosphate anion to isochorismate to yield 2-succinyl-5-enolpyruvyl-6-hydroxy-3-cyclohexene-1-carboxylate (SEPHCHC). This Actinobacillus pleuropneumoniae serotype 5b (strain L20) protein is 2-succinyl-5-enolpyruvyl-6-hydroxy-3-cyclohexene-1-carboxylate synthase.